The chain runs to 37 residues: Putative preoptic regulatory factor 1 (37 aa).

2 consecutive propeptides follow at residues 1–7 (MPYSLQP) and 18–37 (FPLCMYMVRGSTWTLVPPDL).

Belongs to the GnRH family. Preoptic area and testis.

The protein resides in the secreted. Its function is as follows. Precursor for a gonadotropin regulatory hormone (GNRH) related decapeptide. This Rattus norvegicus (Rat) protein is Putative preoptic regulatory factor 1 (Porf1).